Here is a 524-residue protein sequence, read N- to C-terminus: Cytochrome P450 4F11 (524 aa).

The chain crosses the membrane as a helical span at residues 15-37; that stretch reads AASPWLLLLLVGGSWLLARVLAW. 4-hydroxynonenal-conjugated cysteine occurs at positions 45 and 260. At His261 the chain carries 4-hydroxynonenal-conjugated histidine. Residue Glu328 coordinates heme. His347 carries the 4-hydroxynonenal-conjugated histidine modification. Cys354 is modified (4-hydroxynonenal-conjugated cysteine). Lys451 carries the 4-hydroxynonenal-conjugated lysine modification. Cys468 serves as a coordination point for heme.

Belongs to the cytochrome P450 family. Requires heme as cofactor. In terms of processing, 4-hydroxynonenal conjugation impairs substrate binding and the long-chain fatty acid omega-monooxygenase activity. As to expression, expressed mainly in human liver, followed by kidney, heart, and skeletal muscle.

Its subcellular location is the endoplasmic reticulum membrane. The protein localises to the microsome membrane. It carries out the reaction an organic molecule + reduced [NADPH--hemoprotein reductase] + O2 = an alcohol + oxidized [NADPH--hemoprotein reductase] + H2O + H(+). The catalysed reaction is an omega-methyl-long-chain fatty acid + reduced [NADPH--hemoprotein reductase] + O2 = an omega-hydroxy-long-chain fatty acid + oxidized [NADPH--hemoprotein reductase] + H2O + H(+). The enzyme catalyses dodecanoate + reduced [NADPH--hemoprotein reductase] + O2 = 12-hydroxydodecanoate + oxidized [NADPH--hemoprotein reductase] + H2O + H(+). It catalyses the reaction hexadecanoate + reduced [NADPH--hemoprotein reductase] + O2 = 16-hydroxyhexadecanoate + oxidized [NADPH--hemoprotein reductase] + H2O + H(+). It carries out the reaction (9Z)-octadecenoate + reduced [NADPH--hemoprotein reductase] + O2 = 18-hydroxy-(9Z)-octadecenoate + oxidized [NADPH--hemoprotein reductase] + H2O + H(+). The catalysed reaction is (5Z,8Z,11Z,14Z)-eicosatetraenoate + reduced [NADPH--hemoprotein reductase] + O2 = 20-hydroxy-(5Z,8Z,11Z,14Z)-eicosatetraenoate + oxidized [NADPH--hemoprotein reductase] + H2O + H(+). The enzyme catalyses (4Z,7Z,10Z,13Z,16Z,19Z)-docosahexaenoate + reduced [NADPH--hemoprotein reductase] + O2 = 22-hydroxy-(4Z,7Z,10Z,13Z,16Z,19Z)-docosahexaenoate + oxidized [NADPH--hemoprotein reductase] + H2O + H(+). It catalyses the reaction 8-hydroxy-(5Z,9E,11Z,14Z)-eicosatetraenoate + reduced [NADPH--hemoprotein reductase] + O2 = 8,20-dihydroxy-(5Z,9E,11Z,14Z)-eicosatetraenoate + oxidized [NADPH--hemoprotein reductase] + H2O + H(+). It carries out the reaction 3-hydroxyhexadecanoate + reduced [NADPH--hemoprotein reductase] + O2 = 3,16-dihydroxyhexadecanoate + oxidized [NADPH--hemoprotein reductase] + H2O + H(+). The catalysed reaction is 3-hydroxyoctadecanoate + reduced [NADPH--hemoprotein reductase] + O2 = 3,18-dihydroxyoctadecanoate + oxidized [NADPH--hemoprotein reductase] + H2O + H(+). The enzyme catalyses phylloquinone + reduced [NADPH--hemoprotein reductase] + O2 = omega-hydroxyphylloquinone + oxidized [NADPH--hemoprotein reductase] + H2O + H(+). It catalyses the reaction menaquinone-4 + reduced [NADPH--hemoprotein reductase] + O2 = omega-hydroxymenaquinone-4 + oxidized [NADPH--hemoprotein reductase] + H2O + H(+). It carries out the reaction 2-hexyl-5-pentylresorcinol + reduced [NADPH--hemoprotein reductase] + O2 = 2-hexyl-5-(5-hydroxypentyl)resorcinol + oxidized [NADPH--hemoprotein reductase] + H2O + H(+). The catalysed reaction is 2-hexyl-5-heptylresorcinol + reduced [NADPH--hemoprotein reductase] + O2 = 2-hexyl-5-(7-hydroxyheptyl)resorcinol + oxidized [NADPH--hemoprotein reductase] + H2O + H(+). The enzyme catalyses 12-hydroxy-(5Z,8Z,10E,14Z)-eicosatetraenoate + reduced [NADPH--hemoprotein reductase] + O2 = 12,20-dihydroxy-(5Z,8Z,10E,14Z)-eicosatetraenoate + oxidized [NADPH--hemoprotein reductase] + H2O + H(+). It catalyses the reaction 15-hydroxy-(5Z,8Z,11Z,13E)-eicosatetraenoate + reduced [NADPH--hemoprotein reductase] + O2 = 15,20-dihydroxy-(5Z,8Z,11Z,13E)-eicosatetraenoate + oxidized [NADPH--hemoprotein reductase] + H2O + H(+). The protein operates within lipid metabolism; arachidonate metabolism. It participates in lipid metabolism; oxylipin biosynthesis. Its pathway is cofactor degradation; phylloquinone degradation. It functions in the pathway xenobiotic degradation. With respect to regulation, inhibition of the long-chain fatty acid omega-monooxygenase activity by 4-hydroxynonenal (4-HNE) conjugation. Functionally, a cytochrome P450 monooxygenase involved in the metabolism of various endogenous substrates, including fatty acids and their oxygenated derivatives (oxylipins). Mechanistically, uses molecular oxygen inserting one oxygen atom into a substrate, and reducing the second into a water molecule, with two electrons provided by NADPH via cytochrome P450 reductase (CPR; NADPH-ferrihemoprotein reductase). Catalyzes with high efficiency the oxidation of the terminal carbon (omega-oxidation) of 3-hydroxy fatty acids, such as 3-hydroxyhexadecanoic and 3-hydroxyoctadecanoic acids, likely participating in the biosynthesis of long-chain 3-hydroxydicarboxylic acids. Omega-hydroxylates and inactivates phylloquinone (vitamin K1), and menaquinone-4 (MK-4, a form of vitamin K2), both acting as cofactors in blood coagulation. Metabolizes with low efficiciency fatty acids, including (5Z,8Z,11Z,14Z)-eicosatetraenoic acid (arachidonate) and its oxygenated metabolite 8-hydroxyeicosatetraenoic acid (8-HETE). Catalyzes N- and O-demethylation of drugs such as erythromycin, benzphetamine, ethylmorphine, chlorpromazine, imipramine and verapamil. Catalyzes the oxidation of dialkylresorcinol 2. The chain is Cytochrome P450 4F11 from Homo sapiens (Human).